We begin with the raw amino-acid sequence, 332 residues long: Glyceraldehyde-3-phosphate dehydrogenase 1 (332 aa).

Arg11, Ile12, Asp33, and Thr120 together coordinate NAD(+). D-glyceraldehyde 3-phosphate is bound by residues 149–151 (SCT), Thr180, 209–210 (TG), and Arg232. Cys150 acts as the Nucleophile in catalysis. Residues Asn314 and Tyr318 each contribute to the NAD(+) site.

Belongs to the glyceraldehyde-3-phosphate dehydrogenase family. In terms of assembly, homotetramer.

It is found in the cytoplasm. The enzyme catalyses D-glyceraldehyde 3-phosphate + phosphate + NAD(+) = (2R)-3-phospho-glyceroyl phosphate + NADH + H(+). It catalyses the reaction NADH + H2O = (6R)-NADHX. It carries out the reaction NADH + H2O = (6S)-NADHX. The catalysed reaction is NADPH + H2O = (6R)-NADPHX. The enzyme catalyses NADPH + H2O = (6S)-NADPHX. It functions in the pathway carbohydrate degradation; glycolysis; pyruvate from D-glyceraldehyde 3-phosphate: step 1/5. Functionally, glyceraldehyde-3-phosphate dehydrogenase (GAPDH) involved in glycolysis and gluconeogenesis. Catalyzes the reaction of glyceraldehyde-3-phosphate to 1,3 bis-phosphoglycerate. The contribution of the TDH1, TDH2, and TDH3 to the total glyceraldehyde-3-phosphate dehydrogenase activity is 10-15, 25-30, and 50-60%, respectively. May be involved in a process other than glycolysis because it is synthesized by cells in stationary phase. Its function is as follows. As a side activity, catalyzes the hydration of the nicotinamide ring of NADH or NADPH at the C6 position to give the corresponding hydrates, NADHX and NADPHX, which exist as R and S epimers, that cannot act as electron donors or acceptors and inhibit several dehydrogenases, making them toxic. This is Glyceraldehyde-3-phosphate dehydrogenase 1 from Saccharomyces cerevisiae (strain ATCC 204508 / S288c) (Baker's yeast).